A 243-amino-acid polypeptide reads, in one-letter code: Leucyl/phenylalanyl-tRNA--protein transferase (243 aa).

A disordered region spans residues 1–22 (MHSQPYLLSPTPNTPFPPAEHA).

It belongs to the L/F-transferase family.

The protein resides in the cytoplasm. It carries out the reaction N-terminal L-lysyl-[protein] + L-leucyl-tRNA(Leu) = N-terminal L-leucyl-L-lysyl-[protein] + tRNA(Leu) + H(+). It catalyses the reaction N-terminal L-arginyl-[protein] + L-leucyl-tRNA(Leu) = N-terminal L-leucyl-L-arginyl-[protein] + tRNA(Leu) + H(+). The enzyme catalyses L-phenylalanyl-tRNA(Phe) + an N-terminal L-alpha-aminoacyl-[protein] = an N-terminal L-phenylalanyl-L-alpha-aminoacyl-[protein] + tRNA(Phe). Functionally, functions in the N-end rule pathway of protein degradation where it conjugates Leu, Phe and, less efficiently, Met from aminoacyl-tRNAs to the N-termini of proteins containing an N-terminal arginine or lysine. The sequence is that of Leucyl/phenylalanyl-tRNA--protein transferase from Xylella fastidiosa (strain M23).